Reading from the N-terminus, the 395-residue chain is Nicotinamide/nicotinic acid mononucleotide adenylyltransferase 2 (395 aa).

2 disordered regions span residues 1–34 (MDPTKAPDFKPPQPNEELQPPPDPTHTIPKSGPI) and 62–102 (KKNA…NGID). Pro residues predominate over residues 9-24 (FKPPQPNEELQPPPDP). Ser85, Ser89, and Ser90 each carry phosphoserine. 2 residues coordinate NAD(+): Ser167 and Phe168. ATP contacts are provided by His175 and Arg209. NAD(+) is bound by residues Thr247, Gly282, Asp284, Trp295, Arg314, and Asn345. 350-353 (TKVR) provides a ligand contact to ATP.

Belongs to the eukaryotic NMN adenylyltransferase family. The cofactor is Co(2+).

It localises to the nucleus. The enzyme catalyses beta-nicotinamide D-ribonucleotide + ATP + H(+) = diphosphate + NAD(+). It catalyses the reaction nicotinate beta-D-ribonucleotide + ATP + H(+) = deamido-NAD(+) + diphosphate. It participates in cofactor biosynthesis; NAD(+) biosynthesis; deamido-NAD(+) from nicotinate D-ribonucleotide: step 1/1. It functions in the pathway cofactor biosynthesis; NAD(+) biosynthesis; NAD(+) from nicotinamide D-ribonucleotide: step 1/1. In terms of biological role, catalyzes the formation of NAD(+) from nicotinamide mononucleotide (NMN) and ATP. Can also use the deamidated form; nicotinic acid mononucleotide (NaMN) as substrate to form deamido-NAD(+) (NaAD). Key enzyme in both de novo and salvage pathways for NAD(+) biosynthesis. Predominantly acts in the salvage pathways via NMN. This chain is Nicotinamide/nicotinic acid mononucleotide adenylyltransferase 2, found in Saccharomyces cerevisiae (strain ATCC 204508 / S288c) (Baker's yeast).